We begin with the raw amino-acid sequence, 316 residues long: HPr kinase/phosphorylase (316 aa).

Residues histidine 143 and lysine 164 contribute to the active site. ATP is bound at residue 158–165 (GEAGSGKS). Position 165 (serine 165) interacts with Mg(2+). Catalysis depends on aspartate 182, which acts as the Proton acceptor; for phosphorylation activity. Proton donor; for dephosphorylation activity. The tract at residues 206–215 (LEVRGLGVLN) is important for the catalytic mechanism of both phosphorylation and dephosphorylation. Residue glutamate 207 coordinates Mg(2+). Arginine 251 is a catalytic residue. The interval 272 to 277 (PVMPGR) is important for the catalytic mechanism of dephosphorylation.

This sequence belongs to the HPrK/P family. As to quaternary structure, homohexamer. Mg(2+) serves as cofactor.

It catalyses the reaction [HPr protein]-L-serine + ATP = [HPr protein]-O-phospho-L-serine + ADP + H(+). It carries out the reaction [HPr protein]-O-phospho-L-serine + phosphate + H(+) = [HPr protein]-L-serine + diphosphate. Functionally, catalyzes the ATP- as well as the pyrophosphate-dependent phosphorylation of a specific serine residue in HPr, a phosphocarrier protein of the phosphoenolpyruvate-dependent sugar phosphotransferase system (PTS). HprK/P also catalyzes the pyrophosphate-producing, inorganic phosphate-dependent dephosphorylation (phosphorolysis) of seryl-phosphorylated HPr (P-Ser-HPr). This is HPr kinase/phosphorylase from Xylella fastidiosa (strain 9a5c).